The following is an 890-amino-acid chain: MEGGGKPNSSSNSRDDGNSVFPAKASATGAGPAAAEKRLGTPPGGGGAGAKEHGNSVCFKVDGGGGGGGGGGGGEEPAGGFEDAEGPRRQYGFMQRQFTSMLQPGVNKFSLRMFGSQKAVEKEQERVKTAGFWIIHPYSDFRFYWDLIMLIMMVGNLVIIPVGITFFTEQTTTPWIIFNVASDTVFLLDLIMNFRTGTVNEDSSEIILDPKVIKMNYLKSWFVVDFISSIPVDYIFLIVEKGMDSEVYKTARALRIVRFTKILSLLRLLRLSRLIRYIHQWEEIFHMTYDLASAVVRIFNLIGMMLLLCHWDGCLQFLVPLLQDFPPDCWVSLNEMVNDSWGKQYSYALFKAMSHMLCIGYGAQAPVSMSDLWITMLSMIVGATCYAMFVGHATALIQSLDSSRRQYQEKYKQVEQYMSFHKLPADMRQKIHDYYEHRYQGKIFDEENILNELNDPLREEIVNFNCRKLVATMPLFANADPNFVTAMLSKLRFEVFQPGDYIIREGAVGKKMYFIQHGVAGVITKSSKEMKLTDGSYFGEICLLTKGRRTASVRADTYCRLYSLSVDNFNEVLEEYPMMRRAFETVAIDRLDRIGKKNSILLQKFQKDLNTGVFNNQENEILKQIVKHDREMVQAIAPINYPQMTTLNSTSSTTTPTSRMRTQSPPVYTATSLSHSNLHSPSPSTQTPQPSAILSPCSYTTAVCSPPVQSPLAARTFHYASPTASQLSLMQQQPQQQVQQSQPPQTQPQQPSPQPQTPGSSTPKNEVHKSTQALHNTNLTREVRPLSASQPSLPHEVSTLISRPHPTVGESLASIPQPVTAVPGTGLQAGGRSTVPQRVTLFRQMSSGAIPPNRGVPPAPPPPAAALPRESSSVLNTDPDAEKPRFASNL.

The disordered stretch occupies residues 1 to 93 (MEGGGKPNSS…AEGPRRQYGF (93 aa)). The Cytoplasmic portion of the chain corresponds to 1-142 (MEGGGKPNSS…WIIHPYSDFR (142 aa)). Residues 8-34 (NSSSNSRDDGNSVFPAKASATGAGPAA) show a composition bias toward low complexity. A compositionally biased stretch (gly residues) spans 62–77 (DGGGGGGGGGGGGEEP). The chain crosses the membrane as a helical span at residues 143–164 (FYWDLIMLIMMVGNLVIIPVGI). Residues 165-173 (TFFTEQTTT) lie on the Extracellular side of the membrane. A helical transmembrane segment spans residues 174–194 (PWIIFNVASDTVFLLDLIMNF). Residues 195–215 (RTGTVNEDSSEIILDPKVIKM) lie on the Cytoplasmic side of the membrane. The chain crosses the membrane as a helical span at residues 216–236 (NYLKSWFVVDFISSIPVDYIF). At 237–260 (LIVEKGMDSEVYKTARALRIVRFT) the chain is on the extracellular side. Residues 261-281 (KILSLLRLLRLSRLIRYIHQW) traverse the membrane as a helical; Voltage-sensor segment. Residues 282–295 (EEIFHMTYDLASAV) are Cytoplasmic-facing. The helical transmembrane segment at 296–318 (VRIFNLIGMMLLLCHWDGCLQFL) threads the bilayer. Residues 319–344 (VPLLQDFPPDCWVSLNEMVNDSWGKQ) lie on the Extracellular side of the membrane. Asn338 carries N-linked (GlcNAc...) asparagine glycosylation. The segment at residues 345 to 366 (YSYALFKAMSHMLCIGYGAQAP) is an intramembrane region (pore-forming). The Selectivity filter signature appears at 358-362 (CIGYG). Residues 367 to 371 (VSMSD) are Extracellular-facing. Residues 372-392 (LWITMLSMIVGATCYAMFVGH) traverse the membrane as a helical segment. Over 393-890 (ATALIQSLDS…AEKPRFASNL (498 aa)) the chain is Cytoplasmic. 3',5'-cyclic AMP contacts are provided by Gly539, Glu540, Cys542, Arg549, Thr550, Arg590, and Arg593. Low complexity-rich tracts occupy residues 644-691 (MTTL…PQPS) and 731-749 (QQQP…TQPQ). 3 disordered regions span residues 644–692 (MTTL…QPSA), 725–796 (SQLS…LPHE), and 845–890 (MSSG…ASNL). Residues 770 to 780 (STQALHNTNLT) are compositionally biased toward polar residues. The span at 854 to 865 (RGVPPAPPPPAA) shows a compositional bias: pro residues. Over residues 880–890 (DAEKPRFASNL) the composition is skewed to basic and acidic residues.

It belongs to the potassium channel HCN family. Homotetramer. Heterotetramer with HCN2. The potassium channel is composed of a homo- or heterotetrameric complex of pore-forming subunits. Interacts with KCNE2. Interacts with the SH3 domain of CSK. In terms of tissue distribution, detected in brain, in particular in amygdala and hippocampus, while expression in caudate nucleus, corpus callosum, substantia nigra, subthalamic nucleus and thalamus is very low or not detectable. Detected at very low levels in muscle and pancreas.

The protein resides in the cell membrane. It catalyses the reaction Na(+)(in) = Na(+)(out). The enzyme catalyses K(+)(in) = K(+)(out). With respect to regulation, activated by cAMP, and at 10-100 times higher concentrations, also by cGMP. cAMP binding promotes tetramerization and formation of an active channel. Compared to other family members, cAMP has less stimulatory effect on HCN1 because part of the molecules already contain bound cAMP and form homotetramers when cAMP levels are low, this inherent tetramerization in HCN1 results in a weaker response to increased cAMP. Inhibited by Cs(1+), zatebradine, capsazepine and ZD7288. Hyperpolarization-activated ion channel that are permeable to sodium and potassium ions. Displays lower selectivity for K(+) over Na(+) ions. Contributes to the native pacemaker currents in heart (If) and in the generation of the I(h) current which controls neuron excitability. Participates in cerebellar mechanisms of motor learning. May mediate responses to sour stimuli. The sequence is that of Potassium/sodium hyperpolarization-activated cyclic nucleotide-gated channel 1 (HCN1) from Homo sapiens (Human).